Here is a 441-residue protein sequence, read N- to C-terminus: N-acetylmuramyl-L-alanine amidase (441 aa).

The signal sequence occupies residues 1–25; that stretch reads MKTKTLFIFSAILTLSIFAPNETFA.

Belongs to the peptidase S12 family.

It carries out the reaction Hydrolyzes the link between N-acetylmuramoyl residues and L-amino acid residues in certain cell-wall glycopeptides.. Its pathway is cell wall biogenesis; peptidoglycan recycling. Its function is as follows. Involved in muropeptide recycling. Hydrolyzes the amide bond between N-acetylmuramic acid (MurNAc) and the L-alanine residue of the stem peptide. Cannot hydrolyze muropeptides containing N-acetylglucosamine (GlcNAc) at the non-reducing end. In Bacillus subtilis (strain 168), this protein is N-acetylmuramyl-L-alanine amidase.